The following is a 181-amino-acid chain: TATA-box-binding protein (181 aa).

2 repeat units span residues 7 to 83 (VVNV…VKEL) and 98 to 173 (VQNM…SKTL).

This sequence belongs to the TBP family.

Its function is as follows. General factor that plays a role in the activation of archaeal genes transcribed by RNA polymerase. Binds specifically to the TATA box promoter element which lies close to the position of transcription initiation. The protein is TATA-box-binding protein of Methanococcus maripaludis (strain DSM 14266 / JCM 13030 / NBRC 101832 / S2 / LL).